The following is a 489-amino-acid chain: Ketol-acid reductoisomerase (NADP(+)) (489 aa).

The KARI N-terminal Rossmann domain maps to 16-207; that stretch reads LRKCKLVEKN…GSHRAGVLHS (192 aa). NADP(+) is bound by residues 44-47, Arg-67, Ser-77, and 107-109; these read CGSQ and DKQ. His-131 is an active-site residue. Residue Gly-157 participates in NADP(+) binding. 2 consecutive KARI C-terminal knotted domains span residues 208-343 and 344-483; these read SFIA…KCKI and CHKE…MVDM. The Mg(2+) site is built by Asp-216, Glu-220, Glu-388, and Glu-392. Substrate is bound at residue Ser-413.

Belongs to the ketol-acid reductoisomerase family. Mg(2+) is required as a cofactor.

The enzyme catalyses (2R)-2,3-dihydroxy-3-methylbutanoate + NADP(+) = (2S)-2-acetolactate + NADPH + H(+). The catalysed reaction is (2R,3R)-2,3-dihydroxy-3-methylpentanoate + NADP(+) = (S)-2-ethyl-2-hydroxy-3-oxobutanoate + NADPH + H(+). It participates in amino-acid biosynthesis; L-isoleucine biosynthesis; L-isoleucine from 2-oxobutanoate: step 2/4. It functions in the pathway amino-acid biosynthesis; L-valine biosynthesis; L-valine from pyruvate: step 2/4. Its function is as follows. Involved in the biosynthesis of branched-chain amino acids (BCAA). Catalyzes an alkyl-migration followed by a ketol-acid reduction of (S)-2-acetolactate (S2AL) to yield (R)-2,3-dihydroxy-isovalerate. In the isomerase reaction, S2AL is rearranged via a Mg-dependent methyl migration to produce 3-hydroxy-3-methyl-2-ketobutyrate (HMKB). In the reductase reaction, this 2-ketoacid undergoes a metal-dependent reduction by NADPH to yield (R)-2,3-dihydroxy-isovalerate. The sequence is that of Ketol-acid reductoisomerase (NADP(+)) from Buchnera aphidicola subsp. Schlechtendalia chinensis.